The sequence spans 312 residues: Malate dehydrogenase (312 aa).

NAD(+)-binding positions include 7 to 13 (GAAGGIG) and Asp-34. Residues Arg-81 and Arg-87 each contribute to the substrate site. Residues Asn-94 and 117–119 (ITN) each bind NAD(+). Substrate is bound by residues Asn-119 and Arg-153. His-177 acts as the Proton acceptor in catalysis. Met-227 is a binding site for NAD(+).

This sequence belongs to the LDH/MDH superfamily. MDH type 1 family. As to quaternary structure, homodimer.

It catalyses the reaction (S)-malate + NAD(+) = oxaloacetate + NADH + H(+). Its function is as follows. Catalyzes the reversible oxidation of malate to oxaloacetate. In Klebsiella pneumoniae subsp. pneumoniae (strain ATCC 700721 / MGH 78578), this protein is Malate dehydrogenase (mdh).